The following is a 226-amino-acid chain: UPF0173 metal-dependent hydrolase GWCH70_2696 (226 aa).

It belongs to the UPF0173 family.

This chain is UPF0173 metal-dependent hydrolase GWCH70_2696, found in Geobacillus sp. (strain WCH70).